The following is a 215-amino-acid chain: Imidazole glycerol phosphate synthase subunit HisH (215 aa).

Residues glutamate 9–arginine 215 enclose the Glutamine amidotransferase type-1 domain. The Nucleophile role is filled by cysteine 85. Catalysis depends on residues histidine 193 and glutamate 195.

As to quaternary structure, heterodimer of HisH and HisF.

Its subcellular location is the cytoplasm. It carries out the reaction 5-[(5-phospho-1-deoxy-D-ribulos-1-ylimino)methylamino]-1-(5-phospho-beta-D-ribosyl)imidazole-4-carboxamide + L-glutamine = D-erythro-1-(imidazol-4-yl)glycerol 3-phosphate + 5-amino-1-(5-phospho-beta-D-ribosyl)imidazole-4-carboxamide + L-glutamate + H(+). The catalysed reaction is L-glutamine + H2O = L-glutamate + NH4(+). The protein operates within amino-acid biosynthesis; L-histidine biosynthesis; L-histidine from 5-phospho-alpha-D-ribose 1-diphosphate: step 5/9. In terms of biological role, IGPS catalyzes the conversion of PRFAR and glutamine to IGP, AICAR and glutamate. The HisH subunit catalyzes the hydrolysis of glutamine to glutamate and ammonia as part of the synthesis of IGP and AICAR. The resulting ammonia molecule is channeled to the active site of HisF. This is Imidazole glycerol phosphate synthase subunit HisH from Natronomonas pharaonis (strain ATCC 35678 / DSM 2160 / CIP 103997 / JCM 8858 / NBRC 14720 / NCIMB 2260 / Gabara) (Halobacterium pharaonis).